Here is a 159-residue protein sequence, read N- to C-terminus: Insertion element IS136 uncharacterized 16.9 kDa protein (159 aa).

A compositionally biased stretch (low complexity) spans arginine 126 to serine 142. The tract at residues arginine 126–threonine 159 is disordered.

The polypeptide is Insertion element IS136 uncharacterized 16.9 kDa protein (Agrobacterium tumefaciens (strain T37)).